Here is a 398-residue protein sequence, read N- to C-terminus: Acetate kinase 1 (398 aa).

N9 serves as a coordination point for Mg(2+). K16 is an ATP binding site. Residue R89 participates in substrate binding. The active-site Proton donor/acceptor is the D146. Residues 206–210 (HLGNG), 281–283 (DCR), and 329–333 (GIGEN) contribute to the ATP site. A Mg(2+)-binding site is contributed by E384.

It belongs to the acetokinase family. As to quaternary structure, homodimer. It depends on Mg(2+) as a cofactor. The cofactor is Mn(2+).

Its subcellular location is the cytoplasm. It catalyses the reaction acetate + ATP = acetyl phosphate + ADP. The protein operates within metabolic intermediate biosynthesis; acetyl-CoA biosynthesis; acetyl-CoA from acetate: step 1/2. Functionally, catalyzes the formation of acetyl phosphate from acetate and ATP. Can also catalyze the reverse reaction. The chain is Acetate kinase 1 from Vibrio parahaemolyticus serotype O3:K6 (strain RIMD 2210633).